A 475-amino-acid polypeptide reads, in one-letter code: Ribulose bisphosphate carboxylase large chain (475 aa).

Positions 1–2 (MS) are excised as a propeptide. Position 3 is an N-acetylproline (P3). An N6,N6,N6-trimethyllysine modification is found at K14. 2 residues coordinate substrate: N123 and T173. The active-site Proton acceptor is the K175. K177 serves as a coordination point for substrate. K201, D203, and E204 together coordinate Mg(2+). Residue K201 is modified to N6-carboxylysine. The active-site Proton acceptor is H294. The substrate site is built by R295, H327, and S379.

The protein belongs to the RuBisCO large chain family. Type I subfamily. Heterohexadecamer of 8 large chains and 8 small chains; disulfide-linked. The disulfide link is formed within the large subunit homodimers. Mg(2+) serves as cofactor. In terms of processing, the disulfide bond which can form in the large chain dimeric partners within the hexadecamer appears to be associated with oxidative stress and protein turnover.

It localises to the plastid. The protein resides in the chloroplast. It carries out the reaction 2 (2R)-3-phosphoglycerate + 2 H(+) = D-ribulose 1,5-bisphosphate + CO2 + H2O. The enzyme catalyses D-ribulose 1,5-bisphosphate + O2 = 2-phosphoglycolate + (2R)-3-phosphoglycerate + 2 H(+). In terms of biological role, ruBisCO catalyzes two reactions: the carboxylation of D-ribulose 1,5-bisphosphate, the primary event in carbon dioxide fixation, as well as the oxidative fragmentation of the pentose substrate in the photorespiration process. Both reactions occur simultaneously and in competition at the same active site. This is Ribulose bisphosphate carboxylase large chain from Piper cenocladum (Ant piper).